We begin with the raw amino-acid sequence, 310 residues long: Atrochrysone carboxyl ACP thioesterase CPUR_05436 (310 aa).

Zn(2+)-binding residues include histidine 105, histidine 107, aspartate 109, and histidine 110. Aspartate 109 acts as the Proton donor/acceptor in catalysis.

Belongs to the metallo-beta-lactamase superfamily. It depends on Zn(2+) as a cofactor.

It carries out the reaction atrochrysone carboxyl-[ACP] + H2O = atrochrysone carboxylate + holo-[ACP] + H(+). It functions in the pathway pigment biosynthesis. Atrochrysone carboxyl ACP thioesterase; part of the ergochrome gene cluster responsible for the typical purple-black color of the ergot sclerotia. The ergochrome gene cluster produces several ergot pigments including the yellow ergochrome secalonic acid and its derivatives, as well as the red anthraquinones endocrocin and clavorubin. The pathway begins with the synthesis of atrochrysone thioester by the polyketide synthase (PKS) CPUR_05437. The atrochrysone carboxyl ACP thioesterase CPUR_05436 then breaks the thioester bond and releases the atrochrysone carboxylic acid from CPUR_05437. The atrochrysone carboxylic acid is then converted to atrochrysone which is further transformed into emodin anthrone. The next step is performed by the anthrone oxygenase CPUR_05434 that catalyzes the oxidation of emodinanthrone to emodin. Emodin is further modified to yield monodictyphenone via several steps involving CPUR_05427, CPUR_05428, CPUR_05429 and CPUR_05430. The short chain dehydrogenase/reductase CPUR_05418 then catalyzes the C-5 ketoreduction to give the xanthone skeleton of the monomeric units. Ergochromes formation requires further dimerization steps of different xanthone units, probably catalyzed by the cytochrome P450 monooxygenase CPUR_05419. CPUR_05425, CPUR_05426 and CPUR_05431 are unique to Claviceps, thus it is likely that they are involved in further modification of xanthone units or in their dimerization. The yellow ergochromes and the red anthraquinone pigments endocrocin and clavorubin are products from the same PKS derived precursors and the latter are likely shunt products in the pathway of xanthone biosynthesis. It is proposed that atrochrysone carboxylic acid released from the PKS CPUR_05437 can also be converted to endocrocin anthrone which is further oxidized into endocrocin by CPUR_05435. Endocrocin could be then modified to clavorubin, possibly by CPUR_05423 and CPUR_05431. Clavorubin is the principal anthraquinone metabolite produced by the cluster with a much higher yield compared to endocrocin. This Claviceps purpurea (strain 20.1) (Ergot fungus) protein is Atrochrysone carboxyl ACP thioesterase CPUR_05436.